Reading from the N-terminus, the 394-residue chain is Elongation factor Tu-A (394 aa).

One can recognise a tr-type G domain in the interval 10–204 (KPHVNVGTIG…ALDTYIPEPE (195 aa)). The G1 stretch occupies residues 19-26 (GHVDHGKT). 19–26 (GHVDHGKT) is a GTP binding site. T26 provides a ligand contact to Mg(2+). The tract at residues 60-64 (GITIN) is G2. Positions 81–84 (DCPG) are G3. GTP is bound by residues 81 to 85 (DCPGH) and 136 to 139 (NKCD). The segment at 136–139 (NKCD) is G4. The interval 174–176 (SAL) is G5.

This sequence belongs to the TRAFAC class translation factor GTPase superfamily. Classic translation factor GTPase family. EF-Tu/EF-1A subfamily. As to quaternary structure, monomer.

It is found in the cytoplasm. The catalysed reaction is GTP + H2O = GDP + phosphate + H(+). Its function is as follows. GTP hydrolase that promotes the GTP-dependent binding of aminoacyl-tRNA to the A-site of ribosomes during protein biosynthesis. The chain is Elongation factor Tu-A from Vibrio cholerae serotype O1 (strain ATCC 39315 / El Tor Inaba N16961).